The chain runs to 236 residues: Large ribosomal subunit protein uL1 (236 aa).

This sequence belongs to the universal ribosomal protein uL1 family. As to quaternary structure, part of the 50S ribosomal subunit.

Functionally, binds directly to 23S rRNA. The L1 stalk is quite mobile in the ribosome, and is involved in E site tRNA release. Its function is as follows. Protein L1 is also a translational repressor protein, it controls the translation of the L11 operon by binding to its mRNA. This chain is Large ribosomal subunit protein uL1, found in Protochlamydia amoebophila (strain UWE25).